Consider the following 339-residue polypeptide: Carboxyvinyl-carboxyphosphonate phosphorylmutase, chloroplastic (339 aa).

A chloroplast-targeting transit peptide spans 1-30; sequence MSMLMAVKTTSLCCSSLNLTASPTFRRNPR.

Belongs to the isocitrate lyase/PEP mutase superfamily.

The protein localises to the plastid. It is found in the chloroplast. The enzyme catalyses 1-carboxyvinyl carboxyphosphonate + H(+) = 3-(hydrohydroxyphosphoryl)pyruvate + CO2. The sequence is that of Carboxyvinyl-carboxyphosphonate phosphorylmutase, chloroplastic from Arabidopsis thaliana (Mouse-ear cress).